We begin with the raw amino-acid sequence, 248 residues long: uncharacterized protein (248 aa).

An N-terminal signal peptide occupies residues 1-26 (MVAPRISPKIVLVGFALFAIISASLA).

This is an uncharacterized protein from Acanthamoeba polyphaga mimivirus (APMV).